We begin with the raw amino-acid sequence, 521 residues long: AAA ATPase forming ring-shaped complexes (521 aa).

Positions 4–44 (TEDLAALNDRLMAKNHALAEALSRAGKELTKAKSQLAQLAQ) form a coiled coil. 235–240 (GNGKTM) contacts ATP.

The protein belongs to the AAA ATPase family. As to quaternary structure, homohexamer. Assembles into a hexameric ring structure.

The polypeptide is AAA ATPase forming ring-shaped complexes (Bifidobacterium longum (strain NCC 2705)).